The following is a 185-amino-acid chain: Peptide methionine sulfoxide reductase MsrA (185 aa).

Residue Cys12 is part of the active site.

This sequence belongs to the MsrA Met sulfoxide reductase family.

It carries out the reaction L-methionyl-[protein] + [thioredoxin]-disulfide + H2O = L-methionyl-(S)-S-oxide-[protein] + [thioredoxin]-dithiol. The enzyme catalyses [thioredoxin]-disulfide + L-methionine + H2O = L-methionine (S)-S-oxide + [thioredoxin]-dithiol. Its function is as follows. Has an important function as a repair enzyme for proteins that have been inactivated by oxidation. Catalyzes the reversible oxidation-reduction of methionine sulfoxide in proteins to methionine. This chain is Peptide methionine sulfoxide reductase MsrA, found in Granulibacter bethesdensis (strain ATCC BAA-1260 / CGDNIH1).